We begin with the raw amino-acid sequence, 873 residues long: MPVRQKDAQRALQLLEEYQTKLSQTGDPHLRLSIERVINIFKSTLFQALVDIQEYYEVSLQDTEDKPIEDSSLKSRESFPPVNEWNLSVPPSTTGPTEPVPINLPQTEEKYRYQDEDTTSPPEHSSPHIPGDARPPELVQVSEKNISQIENVHGYVSHSHISPMKQADVIPPPSAPIIPVIPISPVPAETTAIIPAPASQASPAPVVVNTESLDSSPYVNGTEADYEYEEITLERGNSGLGFSIAGGTDNPHIGEDPSIFITKIIPGGAAAQDGRLRVNDCILRVNDVDVRDVTHSNAVEALKEAGCIVRLYVRRRKPLSEKIMDVKLVKGPKGLGFSIAGGVGNQHIPGDNSIYITKIIEGGAAHKDGRLQIGDKLLAVNAVCLEEVTHEDAVAALKNTPDVVYLKVAKPTSVFMNDSYAPPDVTSSYSQHMENHISTQSYLSQPLTPATPSRYSPVSKGMLGDDEITREPRKIVLHRGTTGLGFNIVGGEDGEGIFISFILAGGPADLCGELRKGDRIVSVNGVDLRSATHEQAAAALKNAGQTVTIIAQYRPEEYSRFEAKIHDLREQMMNSSISSGSGSLRTSQKRTLYVRALFDYDITKTVKFNSKSRDKASLNDKRRKTLFSRKFLFSKNKDSGEQDTSDVDQHVTSNASDSESSFRGQEDYVLSYETVTQQEVSYSRPVIILGPMKDRINDDLISEFPDKFGSCVPHTTRPKRDYEVDGRDYHFVNSREQMEKDIQDHKFIEAGQYNNHLYGTSVQSVREVAEKGKHCILDVSGNAIKRLQLAQLYPIAVFIKPKSVENILEMNKRLMEEQGRKTYDRAMKLEQEFLEHFTAIVQGDTLEEIYNQVKQIIEEQSGPFIWVPVKEKL.

One can recognise an L27 domain in the interval 4 to 64; that stretch reads RQKDAQRALQ…YYEVSLQDTE (61 aa). The segment at 62–135 is disordered; sequence DTEDKPIEDS…SPHIPGDARP (74 aa). Positions 63–77 are enriched in basic and acidic residues; that stretch reads TEDKPIEDSSLKSRE. Residues 85 to 96 are compositionally biased toward polar residues; it reads WNLSVPPSTTGP. 2 consecutive PDZ domains span residues 230 to 317 and 325 to 412; these read EITL…RRRK and DVKL…AKPT. Residues 441–456 are compositionally biased toward polar residues; sequence SYLSQPLTPATPSRYS. The disordered stretch occupies residues 441-464; the sequence is SYLSQPLTPATPSRYSPVSKGMLG. Residues 474-555 enclose the PDZ 3 domain; the sequence is KIVLHRGTTG…TVTIIAQYRP (82 aa). A disordered region spans residues 636-662; sequence NKDSGEQDTSDVDQHVTSNASDSESSF. The span at 650 to 662 shows a compositional bias: polar residues; that stretch reads HVTSNASDSESSF. The 176-residue stretch at 683–858 folds into the Guanylate kinase-like domain; it reads SRPVIILGPM…IYNQVKQIIE (176 aa).

Belongs to the MAGUK family.

Its subcellular location is the cell membrane. It is found in the endoplasmic reticulum membrane. It localises to the cell junction. The protein resides in the apical cell membrane. Its function is as follows. Essential multidomain scaffolding protein required for normal development. Recruits channels, receptors and signaling molecules to discrete plasma membrane domains in polarized cells. Promotes epithelial cell layer barrier function via maintaining cell-cell adhesion. May play a role in adherens junction assembly, signal transduction and cell proliferation. May play a role in synapse assembly and function. The sequence is that of Disks large homolog 1 (dlg1) from Danio rerio (Zebrafish).